The chain runs to 541 residues: Probable malate:quinone oxidoreductase (541 aa).

Residues 520-541 form a disordered region; the sequence is AKPAAGAAQQAKPAKATADIAL.

This sequence belongs to the MQO family. Requires FAD as cofactor.

It carries out the reaction (S)-malate + a quinone = a quinol + oxaloacetate. The protein operates within carbohydrate metabolism; tricarboxylic acid cycle; oxaloacetate from (S)-malate (quinone route): step 1/1. The sequence is that of Probable malate:quinone oxidoreductase from Ralstonia nicotianae (strain ATCC BAA-1114 / GMI1000) (Ralstonia solanacearum).